A 67-amino-acid chain; its full sequence is DNA-directed RNA polymerase subunit omega (67 aa).

Belongs to the RNA polymerase subunit omega family. As to quaternary structure, the RNAP catalytic core consists of 2 alpha, 1 beta, 1 beta' and 1 omega subunit. When a sigma factor is associated with the core the holoenzyme is formed, which can initiate transcription.

The catalysed reaction is RNA(n) + a ribonucleoside 5'-triphosphate = RNA(n+1) + diphosphate. Functionally, promotes RNA polymerase assembly. Latches the N- and C-terminal regions of the beta' subunit thereby facilitating its interaction with the beta and alpha subunits. This Listeria monocytogenes serotype 4a (strain HCC23) protein is DNA-directed RNA polymerase subunit omega.